A 492-amino-acid chain; its full sequence is Cholesteryl ester transfer protein (492 aa).

An N-terminal signal peptide occupies residues 1 to 17 (MLAVTLLSLALLGSTCA). The cysteines at positions 160 and 201 are disulfide-linked. N-linked (GlcNAc...) asparagine glycosylation is present at Asn257.

It belongs to the BPI/LBP/Plunc superfamily. BPI/LBP family.

It is found in the secreted. The enzyme catalyses cholesteryl (9Z-octadecenoate)(in) = cholesteryl (9Z-octadecenoate)(out). It carries out the reaction 1,2,3-tri-(9Z-octadecenoyl)-glycerol(in) = 1,2,3-tri-(9Z-octadecenoyl)-glycerol(out). The catalysed reaction is cholesteryl (9Z,12Z)-octadecadienoate(in) = cholesteryl (9Z,12Z)-octadecadienoate(out). Its function is as follows. Involved in the transfer of neutral lipids, including cholesteryl ester and triglyceride, among lipoprotein particles. Allows the net movement of cholesteryl ester from high density lipoproteins/HDL to triglyceride-rich very low density lipoproteins/VLDL, and the equimolar transport of triglyceride from VLDL to HDL. Regulates the reverse cholesterol transport, by which excess cholesterol is removed from peripheral tissues and returned to the liver for elimination. The chain is Cholesteryl ester transfer protein from Cricetulus griseus (Chinese hamster).